The sequence spans 291 residues: Nucleotide-binding protein Athe_0320 (291 aa).

Position 9 to 16 (9 to 16 (GMSGAGKS)) interacts with ATP. 60–63 (DIRG) lines the GTP pocket.

The protein belongs to the RapZ-like family.

Its function is as follows. Displays ATPase and GTPase activities. In Caldicellulosiruptor bescii (strain ATCC BAA-1888 / DSM 6725 / KCTC 15123 / Z-1320) (Anaerocellum thermophilum), this protein is Nucleotide-binding protein Athe_0320.